A 407-amino-acid polypeptide reads, in one-letter code: Spore germination protein KC (407 aa).

The signal sequence occupies residues 1–20; it reads MVRKCLLAVLMLLSVIVLPG. Residue C21 is the site of N-palmitoyl cysteine attachment. Residue C21 is the site of S-diacylglycerol cysteine attachment.

Belongs to the GerABKC lipoprotein family.

It localises to the cell membrane. Its function is as follows. Involved in the germination response to the combination of glucose, fructose, L-asparagine, and KCl. The protein is Spore germination protein KC (gerKC) of Bacillus subtilis (strain 168).